Consider the following 198-residue polypeptide: Ribonuclease HII (198 aa).

An RNase H type-2 domain is found at 1–198 (MLCGIDEAGR…QRRSFFVKNL (198 aa)). Residues Asp6, Glu7, and Asp112 each contribute to the a divalent metal cation site.

Belongs to the RNase HII family. Mn(2+) is required as a cofactor. Mg(2+) serves as cofactor.

Its subcellular location is the cytoplasm. The catalysed reaction is Endonucleolytic cleavage to 5'-phosphomonoester.. In terms of biological role, endonuclease that specifically degrades the RNA of RNA-DNA hybrids. The chain is Ribonuclease HII from Treponema denticola (strain ATCC 35405 / DSM 14222 / CIP 103919 / JCM 8153 / KCTC 15104).